The following is a 2225-amino-acid chain: MAALVLEDGSVLQGRPFGAAVSTAGEVVFQTGMVGYPEALTDPSYKAQILVLTYPLIGNYGIPSDEEDEFGLSKWFESSEIHVAGLVVGECCPTPSHWSANCTLHEWLQQRGIPGLQGVDTRELTKKLREQGSLLGKLVQKGTEPSALPFVDPNARPLAPEVSIKTPRVFNAGGAPRICALDCGLKYNQIRCLCQLGAEVTVVPWDHELDSQKYDGLFLSNGPGDPASYPGVVSTLSRVLSEPNPRPVFGICLGHQLLALAIGAKTYKMRYGNRGHNQPCLLVGTGRCFLTSQNHGFAVDADSLPAGWAPLFTNANDCSNEGIVHDSLPFFSVQFHPEHRAGPSDMELLFDVFLETVREAAAGNIGGQTVRERLAQRLCPPELPIPGSGLPPPRKVLILGSGGLSIGQAGEFDYSGSQAIKALKEENIQTLLINPNIATVQTSQGLADKVYFLPITLHYVTQVIRNERPDGVLLTFGGQTALNCGVELTKAGVLARYGVRVLGTPVETIELTEDRRAFAARMAEIGEHVAPSEAANSLEQAQAAAERLGYPVLVRAAFALGGLGSGFASTKEELSALVAPAFAHTSQVLIDKSLKGWKEIEYEVVRDAYGNCVTVCNMENLDPLGIHTGESIVVAPSQTLNDREYQLLRRTAIKVTQHLGIVGECNVQYALNPESEQYYIIEVNARLSRSSALASKATGYPLAYVAAKLALGIPLPELRNSVTGGTAAFEPSLDYCVVKIPRWDLSKFLRVSTKIGSCMKSVGEVMGIGRSFEEAFQKALRMVDENCVGFDHTVKPVSDMELETPTDKRIFVVAAALWAGYSVERLYELTRIDCWFLHRMKRIVTHAQLLEQHRGQALPQDLLHQAKCLGFSDKQIALAVLSTELAVRKLRQELGICPAVKQIDTVAAEWPAQTNYLYLTYWGNTHDLDFRAPHVLVLGSGVYRIGSSVEFDWCAVGCIQQLRKMGYKTIMVNYNPETVSTDYDMCDRLYFDEISFEVVMDIYELENPEGVILSMGGQLPNNMAMALHRQQCRVLGTSPEAIDSAENRFKFSRLLDTIGISQPQWRELSDLESARQFCHTVGYPCVVRPSYVLSGAAMNVAYTDGDLERFLSSAAAVSKEHPVVISKFIQEAKEIDVDAVACDGIVSAIAISEHVENAGVHSGDATLVTPPQDITPKTLERIKAIVHAVGQELQVTGPFNLQLIAKDDQLKVIECNVRVSRSFPFVSKTLGVDLVALATRIIMGEKVEPVGLMTGSGVVGVKVPQFSFSRLAGADVVLGVEMTSTGEVAGFGESRCEAYLKAMLSTGFKIPEKNILLTIGSYKNKSELLPTVRLLESLGYSLYASLGTADFYTEHGVKVTAVDWHFEEAVDGECPPQRSILDQLAENHFELVINLSMRGAGGRRLSSFVTKGYRTRRLAADFSVPLIIDIKCTKLFVEALGQIGPAPPLKVHVDCMTSQKLVRLPGLIDVHVHLREPGGTHKEDFASGTAAALAGGVTMVCAMPNTRPPIIDAPALALAQKLAEAGARCDFTLFLGASSENAGTLGAVAGSAAGLKLYLNETFSELRLDSVAQWMEHFETWPAHLPIVAHAERQSVAAVLMVAQLTQRPVHICHVARKEEILLIKTAKAQGLPVTCEVAPHHLFLNREDLERLGPGKGEVRPELGSREDMEALWENMAVIDCFASDHAPHTLEEKCGPKPPPGFPGLETMLPLLLTAVSEGRLSLDDLLQRLHHNPRRIFHLPLQEDTYVEVDLEHEWTVPSHMPFSKARWTPFEGQKVKGTVRRVVLRGEVAYIDGQVLVPPGYGQDVRKWPQGVVPQPPPSTPATTEITTTPERPRRVIPGLPDGRFHLPPRIHRASDPGLPAEEPKEKPPRKVVEPELMGTPDGPCYPAPPVPRQASPQNLGSSGLLHPQMSPLLHSLVGQHILSVKQFTKDQMSHLFNVAHTLRMMVQKERSLDILKGKVMASMFYEVSTRTSSSFAAAMARLGGAVLSFSEATSSVQKGESLADSVQTMSCYADVIVLRHPQPGAVELAAKHCRRPVINAGDGVGEHPTQALLDIFTIREELGTVNGMTITMVGDLKHGRTVHSLACLLTQYRVSLRYVAPPSLRMPPSVRDFVASRGTKQEEFESIEEALPDTDVLYMTRIQKERFGSVQEYEACFGQFILTPHIMTRAKKKMVVMHPMPRVNEISVEVDSDPRAAYFRQAENGMYIRMALLATVLGRF.

N-acetylalanine is present on Ala-2. Residues Ala-2 to Ile-365 are GATase (Glutamine amidotransferase). Positions 44, 222, and 224 each coordinate L-glutamine. In terms of domain architecture, Glutamine amidotransferase type-1 spans Arg-177–Gly-363. Cys-252 (nucleophile; for GATase activity) is an active-site residue. The L-glutamine site is built by Leu-253, Gln-256, Asn-294, Gly-296, and Phe-297. Residues His-336 and Glu-338 each act as for GATase activity in the active site. The tract at residues Gly-366 to Arg-394 is linker. The segment at Lys-395–Pro-933 is CPSase A. Positions Lys-395–Cys-1455 are CPSase (Carbamoyl-phosphate synthase). Residue Thr-456 is modified to Phosphothreonine; by MAPK1. ATP-binding residues include Arg-515, Arg-555, Gly-561, Gly-562, Lys-592, Glu-599, Gly-625, Ile-626, His-627, Gln-668, and Glu-682. Positions Ala-519–Leu-711 constitute an ATP-grasp 1 domain. The Mg(2+) site is built by Gln-668, Glu-682, and Asn-684. Residues Gln-668, Glu-682, and Asn-684 each coordinate Mn(2+). Lys-747 carries the post-translational modification N6-acetyllysine. The segment at His-934–Cys-1455 is CPSase B. Residue Ser-1038 is modified to Phosphoserine. Residues Ser-1052–Met-1243 enclose the ATP-grasp 2 domain. The ATP site is built by Arg-1088, Lys-1127, Ile-1129, Glu-1134, Gly-1159, Val-1160, His-1161, Ser-1162, Gln-1202, and Glu-1214. Positions 1202, 1214, and 1216 each coordinate Mg(2+). The Mn(2+) site is built by Gln-1202, Glu-1214, and Asn-1216. An MGS-like domain is found at Phe-1308–Val-1462. A Phosphoserine; by PKA modification is found at Ser-1406. Lys-1411 is subject to N6-acetyllysine. Positions Met-1456 to Leu-1788 are DHOase (dihydroorotase). Zn(2+)-binding residues include His-1471 and His-1473. (S)-dihydroorotate-binding residues include Arg-1475 and Asn-1505. Zn(2+) contacts are provided by Lys-1556, His-1590, Cys-1613, His-1614, and Glu-1637. Lys-1556 carries the N6-carboxylysine modification. Residue Arg-1661 participates in (S)-dihydroorotate binding. Asp-1686 serves as a coordination point for Zn(2+). Asp-1686 (for DHOase activity) is an active-site residue. The (S)-dihydroorotate site is built by His-1690 and Pro-1702. The linker stretch occupies residues Arg-1789 to Leu-1917. Positions Gly-1815–Pro-1885 are disordered. Over residues Pro-1825 to Pro-1834 the composition is skewed to low complexity. Position 1859 is a phosphoserine (Ser-1859). Basic and acidic residues predominate over residues Glu-1866–Glu-1878. At Thr-1884 the chain carries Phosphothreonine. 2 positions are modified to phosphoserine: Ser-1900 and Ser-1938. The interval Leu-1918–Phe-2225 is ATCase (Aspartate transcarbamylase). Carbamoyl phosphate contacts are provided by Arg-1975 and Thr-1976. Residue Lys-2003 participates in L-aspartate binding. Residues Arg-2024, His-2052, and Gln-2055 each coordinate carbamoyl phosphate. Positions 2085 and 2146 each coordinate L-aspartate. Residues Met-2185 and Pro-2186 each coordinate carbamoyl phosphate.

The protein in the N-terminal section; belongs to the CarA family. It in the 2nd section; belongs to the CarB family. In the 3rd section; belongs to the metallo-dependent hydrolases superfamily. DHOase family. CAD subfamily. This sequence in the C-terminal section; belongs to the aspartate/ornithine carbamoyltransferase superfamily. ATCase family. In terms of assembly, homohexamer. Interacts with CIPC. Zn(2+) serves as cofactor. It depends on Mg(2+) as a cofactor. Mn(2+) is required as a cofactor. Activated by MAP kinase (Erk1/2) phosphorylation just prior to the S phase of the cell cycle, when the demand for pyrimidine nucleotides is greatest, and down-regulated as the cells emerge from S phase by protein kinase A (PKA) phosphorylation. Phosphorylation at Ser-1859 by RPS6KB1 downstream of MTOR promotes oligomerization and stimulates dihydroorotase activity. Phosphorylation at Ser-1406 reduces sensitivity to feedback inhibition by UTP.

The protein localises to the cytoplasm. It is found in the nucleus. The catalysed reaction is hydrogencarbonate + L-glutamine + 2 ATP + H2O = carbamoyl phosphate + L-glutamate + 2 ADP + phosphate + 2 H(+). It catalyses the reaction L-glutamine + H2O = L-glutamate + NH4(+). The enzyme catalyses hydrogencarbonate + NH4(+) + 2 ATP = carbamoyl phosphate + 2 ADP + phosphate + 2 H(+). It carries out the reaction carbamoyl phosphate + L-aspartate = N-carbamoyl-L-aspartate + phosphate + H(+). The catalysed reaction is (S)-dihydroorotate + H2O = N-carbamoyl-L-aspartate + H(+). It participates in pyrimidine metabolism; UMP biosynthesis via de novo pathway; (S)-dihydroorotate from bicarbonate: step 1/3. The protein operates within pyrimidine metabolism; UMP biosynthesis via de novo pathway; (S)-dihydroorotate from bicarbonate: step 2/3. It functions in the pathway pyrimidine metabolism; UMP biosynthesis via de novo pathway; (S)-dihydroorotate from bicarbonate: step 3/3. With respect to regulation, allosterically regulated and controlled by phosphorylation. 5-phosphoribose 1-diphosphate (PRPP) is an activator while UMP and UTP are inhibitors of the CPSase reaction. In terms of biological role, multifunctional protein that encodes the first 3 enzymatic activities of the de novo pyrimidine pathway: carbamoylphosphate synthetase (CPSase; EC 6.3.5.5), aspartate transcarbamylase (ATCase; EC 2.1.3.2) and dihydroorotase (DHOase; EC 3.5.2.3). The CPSase-function is accomplished in 2 steps, by a glutamine-dependent amidotransferase activity (GATase) that binds and cleaves glutamine to produce ammonia, followed by an ammonium-dependent carbamoyl phosphate synthetase, which reacts with the ammonia, hydrogencarbonate and ATP to form carbamoyl phosphate. The endogenously produced carbamoyl phosphate is sequestered and channeled to the ATCase active site. ATCase then catalyzes the formation of carbamoyl-L-aspartate from L-aspartate and carbamoyl phosphate. In the last step, DHOase catalyzes the cyclization of carbamoyl aspartate to dihydroorotate. This Mus musculus (Mouse) protein is Multifunctional protein CAD (Cad).